A 425-amino-acid chain; its full sequence is Stabilizer of axonemal microtubules 4 (425 aa).

Disordered stretches follow at residues 259-297 (RGSD…YQPP) and 315-335 (NKEP…SYEQ). Over residues 260–272 (GSDRDTGYSRVSE) the composition is skewed to basic and acidic residues. Residues 277–290 (PRMPTPSSQPTSMS) are compositionally biased toward low complexity. Residues 321–332 (FTLNNPSYVRSS) are compositionally biased toward polar residues.

In terms of assembly, microtubule inner protein component of sperm flagellar doublet microtubules. Interacts with PPP1CA. As to expression, expressed in brain, ovaries and testis. Expressed in the tracheal epithelium and in secondary spermatocytes and spermatids present in the seminiferous tubule. Expressed in ependymal cells lining the ventricular walls of the brain.

It is found in the cell projection. Its subcellular location is the cilium. It localises to the cytoplasm. The protein resides in the cytoskeleton. The protein localises to the flagellum axoneme. The chain is Stabilizer of axonemal microtubules 4 from Rattus norvegicus (Rat).